The primary structure comprises 730 residues: Polyribonucleotide nucleotidyltransferase (730 aa).

Positions 494 and 500 each coordinate Mg(2+). In terms of domain architecture, KH spans Pro561 to Ile622. Residues Gly642 to Lys711 form the S1 motif domain.

This sequence belongs to the polyribonucleotide nucleotidyltransferase family. The cofactor is Mg(2+).

The protein localises to the cytoplasm. The catalysed reaction is RNA(n+1) + phosphate = RNA(n) + a ribonucleoside 5'-diphosphate. Functionally, involved in mRNA degradation. Catalyzes the phosphorolysis of single-stranded polyribonucleotides processively in the 3'- to 5'-direction. This is Polyribonucleotide nucleotidyltransferase from Opitutus terrae (strain DSM 11246 / JCM 15787 / PB90-1).